A 101-amino-acid polypeptide reads, in one-letter code: Putative septation protein SpoVG (101 aa).

Positions 82–101 (ELKKGGAAPARATGTDPHED) are disordered.

It belongs to the SpoVG family.

Its function is as follows. Could be involved in septation. This chain is Putative septation protein SpoVG, found in Anaeromyxobacter dehalogenans (strain 2CP-1 / ATCC BAA-258).